Here is a 466-residue protein sequence, read N- to C-terminus: Ribosomal protein uS12 methylthiotransferase RimO (466 aa).

An MTTase N-terminal domain is found at 15–125; the sequence is PKVGFVSLGC…VMEAVHAALP (111 aa). Residues C24, C60, C89, C156, C160, and C163 each contribute to the [4Fe-4S] cluster site. Positions 142 to 380 constitute a Radical SAM core domain; the sequence is LTPRHYAYLK…AKQAEISALR (239 aa). A TRAM domain is found at 382–450; it reads EAKIGSVQQC…EHDLFGDALP (69 aa).

This sequence belongs to the methylthiotransferase family. RimO subfamily. [4Fe-4S] cluster serves as cofactor.

It localises to the cytoplasm. It catalyses the reaction L-aspartate(89)-[ribosomal protein uS12]-hydrogen + (sulfur carrier)-SH + AH2 + 2 S-adenosyl-L-methionine = 3-methylsulfanyl-L-aspartate(89)-[ribosomal protein uS12]-hydrogen + (sulfur carrier)-H + 5'-deoxyadenosine + L-methionine + A + S-adenosyl-L-homocysteine + 2 H(+). Catalyzes the methylthiolation of an aspartic acid residue of ribosomal protein uS12. The polypeptide is Ribosomal protein uS12 methylthiotransferase RimO (Xanthomonas oryzae pv. oryzae (strain MAFF 311018)).